A 321-amino-acid polypeptide reads, in one-letter code: Ribosomal RNA small subunit methyltransferase H (321 aa).

Residues 34 to 36 (GGH), aspartate 54, phenylalanine 80, aspartate 102, and glutamine 109 contribute to the S-adenosyl-L-methionine site.

It belongs to the methyltransferase superfamily. RsmH family.

It localises to the cytoplasm. The catalysed reaction is cytidine(1402) in 16S rRNA + S-adenosyl-L-methionine = N(4)-methylcytidine(1402) in 16S rRNA + S-adenosyl-L-homocysteine + H(+). Functionally, specifically methylates the N4 position of cytidine in position 1402 (C1402) of 16S rRNA. The chain is Ribosomal RNA small subunit methyltransferase H from Blochmanniella floridana.